A 927-amino-acid polypeptide reads, in one-letter code: Dual serine/threonine and tyrosine protein kinase (927 aa).

Residues 1–21 are disordered; sequence MEADGQSWAGESVSGPGPGGG. Residues 393–429 adopt a coiled-coil conformation; that stretch reads RKKENELYESLMNIANRKQEEMKDMIVETLNTMKEEL. Positions 650-904 constitute a Protein kinase domain; the sequence is PKLGQELGRG…PLLGIVQPML (255 aa). Residues 656–664 and Lys-679 each bind ATP; that span reads LGRGQYGVV. The active-site Proton acceptor is the Asp-775.

This sequence belongs to the protein kinase superfamily. Ser/Thr protein kinase family. Expressed in brain, heart, skeletal muscle, kidney and lung. Expressed in maturing tubular epithelia, with the most prominent expression in the medulla and the papilla. Expressed in thin ascending limb of the loop of Henle and the distal convoluted tubule. Expressed in all layers of transitional ureteric epithelium and in the ureteric smooth-muscle cells (at protein level). Widely expressed. Highly expressed in many brain regions, including in cerebellum, olfactory, hippocampus and cerebral cortex.

It is found in the cytoplasm. The protein resides in the cell membrane. It localises to the apical cell membrane. The protein localises to the basolateral cell membrane. Its subcellular location is the cell junction. The catalysed reaction is L-seryl-[protein] + ATP = O-phospho-L-seryl-[protein] + ADP + H(+). The enzyme catalyses L-threonyl-[protein] + ATP = O-phospho-L-threonyl-[protein] + ADP + H(+). It catalyses the reaction L-tyrosyl-[protein] + ATP = O-phospho-L-tyrosyl-[protein] + ADP + H(+). In terms of biological role, acts as a positive regulator of ERK phosphorylation downstream of fibroblast growth factor-receptor activation. Involved in the regulation of both caspase-dependent apoptosis and caspase-independent cell death. In the skin, it plays a predominant role in suppressing caspase-dependent apoptosis in response to UV stress in a range of dermal cell types. The protein is Dual serine/threonine and tyrosine protein kinase (Dstyk) of Mus musculus (Mouse).